A 235-amino-acid polypeptide reads, in one-letter code: 7-cyano-7-deazaguanine synthase (235 aa).

12–22 (FSGGQDSTTCL) contributes to the ATP binding site. Residues C200, C215, C218, and C221 each coordinate Zn(2+).

Belongs to the QueC family. Zn(2+) is required as a cofactor.

The catalysed reaction is 7-carboxy-7-deazaguanine + NH4(+) + ATP = 7-cyano-7-deazaguanine + ADP + phosphate + H2O + H(+). The protein operates within purine metabolism; 7-cyano-7-deazaguanine biosynthesis. Functionally, catalyzes the ATP-dependent conversion of 7-carboxy-7-deazaguanine (CDG) to 7-cyano-7-deazaguanine (preQ(0)). This Leptothrix cholodnii (strain ATCC 51168 / LMG 8142 / SP-6) (Leptothrix discophora (strain SP-6)) protein is 7-cyano-7-deazaguanine synthase.